The sequence spans 530 residues: MSTVAEHVRAAPSSVDRPRTYEVRTYGCQMNVHDSERLTGSLEAAGYVSAEGAEADIVVINTCAVRENADNKLYGNLGHLAGVKRRHEGMQIAVGGCLAQKDRATVLEKAPWVDVVFGTHNMGALPTLLERARHNGEAQLEILESLETFPSTLPTKRDEIASGWVSISVGCNNTCTFCIVPALRGKEKDRRPGDILAEIQALVDDGAVEVTLLGQNVNSYGVEFGDRQAFGKLLRAAGAIEGLERIRFTSPHPAAFTDDVIDAMAETPAVMPQLHMPLQSGSDRILKAMRRSYRSERFLGILDRVRTRVPDAAITTDIIVGFPGETEEDFQETLRVVEAARFSSAFTFQYSIRPGTPAATMEEQVPADVVKERYGRLTALQERISHEENQRVVGRTVEVLVSAHEGRKDGDTRRVTGRAQDGRLVHLDVPEGSAEPRPGDAVDVEVTRAAPFHLIADSVDGAPLRIRRTRAGDAWERAQADSCGVPTPATGASAGAAPRVSLGLPTLRVPTTASTSAPVGDGSAHPRHRA.

An MTTase N-terminal domain is found at 19–134 (RTYEVRTYGC…LPTLLERARH (116 aa)). Cys28, Cys63, Cys97, Cys171, Cys175, and Cys178 together coordinate [4Fe-4S] cluster. The Radical SAM core domain occupies 157 to 387 (RDEIASGWVS…TALQERISHE (231 aa)). The region spanning 390–460 (QRVVGRTVEV…PFHLIADSVD (71 aa)) is the TRAM domain. Residues 509–530 (VPTTASTSAPVGDGSAHPRHRA) form a disordered region.

The protein belongs to the methylthiotransferase family. MiaB subfamily. In terms of assembly, monomer. [4Fe-4S] cluster is required as a cofactor.

It is found in the cytoplasm. The catalysed reaction is N(6)-dimethylallyladenosine(37) in tRNA + (sulfur carrier)-SH + AH2 + 2 S-adenosyl-L-methionine = 2-methylsulfanyl-N(6)-dimethylallyladenosine(37) in tRNA + (sulfur carrier)-H + 5'-deoxyadenosine + L-methionine + A + S-adenosyl-L-homocysteine + 2 H(+). Functionally, catalyzes the methylthiolation of N6-(dimethylallyl)adenosine (i(6)A), leading to the formation of 2-methylthio-N6-(dimethylallyl)adenosine (ms(2)i(6)A) at position 37 in tRNAs that read codons beginning with uridine. In Clavibacter sepedonicus (Clavibacter michiganensis subsp. sepedonicus), this protein is tRNA-2-methylthio-N(6)-dimethylallyladenosine synthase.